The chain runs to 42 residues: Ostricacin-4 (42 aa).

Cystine bridges form between C8/C36, C15/C30, and C20/C37.

Its subcellular location is the secreted. Has antibacterial activity against the Gram-positive bacterium S.aureus 1056 MRSA (MIC=11.48 ug/ml) and the Gram-negative bacterium E.coli O157:H7 (MIC=12.03 ug/ml). Does not have antifungal activity against the yeast C.albicans 3153A. The polypeptide is Ostricacin-4 (Struthio camelus (Common ostrich)).